The following is a 150-amino-acid chain: Putative ribosome maturation factor RimP (150 aa).

This sequence belongs to the RimP family.

The protein resides in the cytoplasm. Required for maturation of 30S ribosomal subunits. This chain is Putative ribosome maturation factor RimP, found in Mycobacterium leprae (strain TN).